The following is a 330-amino-acid chain: D-alanine--D-alanine ligase (330 aa).

In terms of domain architecture, ATP-grasp spans 120 to 326; the sequence is KLWLSALDIP…FKQFLEGIIR (207 aa). An ATP-binding site is contributed by 150–205; it reads AFRNWGAVFVKAASQGSSVGCYKVTDAAKLSEAVNAAFGYSDQVLVEKAVRPRELE. Mg(2+) is bound by residues D280, E293, and N295.

It belongs to the D-alanine--D-alanine ligase family. Mg(2+) is required as a cofactor. The cofactor is Mn(2+).

The protein resides in the cytoplasm. It catalyses the reaction 2 D-alanine + ATP = D-alanyl-D-alanine + ADP + phosphate + H(+). It functions in the pathway cell wall biogenesis; peptidoglycan biosynthesis. Its function is as follows. Cell wall formation. The sequence is that of D-alanine--D-alanine ligase from Tolumonas auensis (strain DSM 9187 / NBRC 110442 / TA 4).